Here is a 694-residue protein sequence, read N- to C-terminus: Inactive protein-arginine deiminase type-6 (694 aa).

S10 and S446 each carry phosphoserine.

The protein belongs to the protein arginine deiminase family. As to quaternary structure, homodimers. Associates with alpha-tubulin. Post-translationally, phosphorylation at Ser-10, possibly by RSK-type kinases, and Ser-446 creates binding sites for 14-3-3 proteins. In terms of tissue distribution, highly expressed in oocytes and weakly expressed in other somatic tissues.

The protein localises to the cytoplasm. It localises to the cytoplasmic vesicle. Its subcellular location is the secretory vesicle. The protein resides in the cortical granule. It is found in the nucleus. Functionally, structural constituent of cytoplasmic lattices, which plays a key role in early embryonic development. Cytoplasmic lattices consist in fibrous structures found in the cytoplasm of oocytes and preimplantation embryos. They are required to store maternal proteins critical for embryonic development, such as ribosomal proteins and proteins that control epigenetic reprogramming of the preimplantation embryo, and prevent their degradation or activation. In contrast to other members of the family, does not show protein-arginine deiminase activity due to its inability to bind Ca(2+). The chain is Inactive protein-arginine deiminase type-6 from Homo sapiens (Human).